An 80-amino-acid chain; its full sequence is D-alanyl carrier protein (80 aa).

One can recognise a Carrier domain in the interval 1–77; that stretch reads MDIQKQIVDI…KLVEQVKKLQ (77 aa). Position 35 is an O-(pantetheine 4'-phosphoryl)serine (serine 35).

Belongs to the DltC family. In terms of processing, 4'-phosphopantetheine is transferred from CoA to a specific serine of apo-DCP.

The protein localises to the cytoplasm. Its pathway is cell wall biogenesis; lipoteichoic acid biosynthesis. In terms of biological role, carrier protein involved in the D-alanylation of lipoteichoic acid (LTA). The loading of thioester-linked D-alanine onto DltC is catalyzed by D-alanine--D-alanyl carrier protein ligase DltA. The DltC-carried D-alanyl group is further transferred to cell membrane phosphatidylglycerol (PG) by forming an ester bond, probably catalyzed by DltD. D-alanylation of LTA plays an important role in modulating the properties of the cell wall in Gram-positive bacteria, influencing the net charge of the cell wall. The protein is D-alanyl carrier protein of Lactobacillus delbrueckii subsp. bulgaricus (strain ATCC 11842 / DSM 20081 / BCRC 10696 / JCM 1002 / NBRC 13953 / NCIMB 11778 / NCTC 12712 / WDCM 00102 / Lb 14).